Reading from the N-terminus, the 579-residue chain is Rho guanine nucleotide exchange factor 25 (579 aa).

Disordered regions lie at residues 27–61 (AVPG…GERE) and 172–194 (VKAQ…EQKK). A DH domain is found at 199–375 (RSMFVLSELV…CFVPKRCNDM (177 aa)). The important for binding to Rho GTPases stretch occupies residues 317 to 338 (LGHRLQLSDLLIKPVQRIMKYQ). A PH domain is found at 380-499 (RLRGFEGKLT…ESQTNSLGRS (120 aa)). The sufficient to bind activated GNAQ stretch occupies residues 472 to 498 (SQRDFLNALQSPIEYQRRESQTNSLGR). Disordered regions lie at residues 487 to 516 (QRRE…VSMH) and 546 to 579 (LSET…EDEL).

Interacts with activated GNAQ and GNA11. Interacts with RHOA, CDC42 and RAC1. Interacts (via the DH domain) with POPDC1 (via the C-terminus cytoplasmic tail).

It localises to the cytoplasm. Its subcellular location is the myofibril. The protein localises to the sarcomere. The protein resides in the cell membrane. May play a role in actin cytoskeleton reorganization in different tissues since its activation induces formation of actin stress fibers. It works as a guanine nucleotide exchange factor for Rho family of small GTPases. Links specifically G alpha q/11-coupled receptors to RHOA activation. May be an important regulator of processes involved in axon and dendrite formation. In neurons seems to be an exchange factor primarily for RAC1. Involved in skeletal myogenesis. This chain is Rho guanine nucleotide exchange factor 25 (Arhgef25), found in Rattus norvegicus (Rat).